The chain runs to 348 residues: MSIEWIQGACAVPDARVQAASLARQEQLTKPPGALGRLEQLAVQFAAWQRNEQPTVQRIWIAVYAADHGVAAEGVSMFPQAVTGEMVRNFARGGAAIAVLARELGARLEVVNLGVVNDPGELPRVRRAWIAPACANICEQAAMTPAQLRDALAAGAESIAQARTCGTQLFVGGEMGIGNSTAAAALSCALLSQFPQAMAGAGTGLDAEGIAHKATVITRALAVHADAATPLERLRRLGGFEIAALVGAYIAAAQAGIPVLVDGFISTAAALVAVHLNPGVREWLLFGHRSQERGHAALLRALEAEPLLQLDLRLGEASGAAVAIPLLRTACALHNGMATFAEAGVSDA.

The active-site Proton acceptor is glutamate 316.

Belongs to the CobT family.

The enzyme catalyses 5,6-dimethylbenzimidazole + nicotinate beta-D-ribonucleotide = alpha-ribazole 5'-phosphate + nicotinate + H(+). The protein operates within nucleoside biosynthesis; alpha-ribazole biosynthesis; alpha-ribazole from 5,6-dimethylbenzimidazole: step 1/2. In terms of biological role, catalyzes the synthesis of alpha-ribazole-5'-phosphate from nicotinate mononucleotide (NAMN) and 5,6-dimethylbenzimidazole (DMB). This chain is Nicotinate-nucleotide--dimethylbenzimidazole phosphoribosyltransferase, found in Xanthomonas campestris pv. campestris (strain 8004).